A 162-amino-acid polypeptide reads, in one-letter code: Ribosomal RNA large subunit methyltransferase H (162 aa).

S-adenosyl-L-methionine is bound at residue G108.

The protein belongs to the RNA methyltransferase RlmH family. In terms of assembly, homodimer.

The protein localises to the cytoplasm. The catalysed reaction is pseudouridine(1915) in 23S rRNA + S-adenosyl-L-methionine = N(3)-methylpseudouridine(1915) in 23S rRNA + S-adenosyl-L-homocysteine + H(+). Its function is as follows. Specifically methylates the pseudouridine at position 1915 (m3Psi1915) in 23S rRNA. This Methylobacterium nodulans (strain LMG 21967 / CNCM I-2342 / ORS 2060) protein is Ribosomal RNA large subunit methyltransferase H.